A 401-amino-acid chain; its full sequence is MAVSMACARPLISVYSEKGETSGKNVTMPAVFKAPIRPDIVNFVHTNLRKNNRQPYAVSKLAGHQTSAESWGTGRAVARIPRVRGGGTHRSGQGAFGNMCRGGRMFAPTKTWRRWHRRVNTTQKRYAVCSALAASALPALIMSKGHRIEEIPEVPLVVEDKVESYKKTKEAVLLLKKLKAWNDIKKVYASQRMRAGKGKMRNRRRIQRRGPCVIYNENNGIIKAFRNIPGITLLNVSKLNLLRLAPGGHVGRFCIWTESAFRKLDDLYGTWRKSAKLKADYNLPMHKMTNTDLTRILKSQEIQRALRAPNKKVKRRELKKNPLKNLRIMMRLNPYAKTARRHAILQQLENIKAKEKKPDDGKPKAKKPLDAKTKMIKLAKAKKRQARAEAKTAEAKTAESK.

The span at 351-373 (IKAKEKKPDDGKPKAKKPLDAKT) shows a compositional bias: basic and acidic residues. The tract at residues 351 to 401 (IKAKEKKPDDGKPKAKKPLDAKTKMIKLAKAKKRQARAEAKTAEAKTAESK) is disordered. Basic residues predominate over residues 374 to 385 (KMIKLAKAKKRQ). The segment covering 386 to 401 (ARAEAKTAEAKTAESK) has biased composition (basic and acidic residues).

Belongs to the universal ribosomal protein uL4 family. As to quaternary structure, component of the large ribosomal subunit.

It localises to the cytoplasm. Functionally, component of the large ribosomal subunit. The ribosome is a large ribonucleoprotein complex responsible for the synthesis of proteins in the cell. The protein is Large ribosomal subunit protein uL4B (rpl4-b) of Xenopus laevis (African clawed frog).